The following is a 183-amino-acid chain: ATP synthase subunit delta (183 aa).

Belongs to the ATPase delta chain family. As to quaternary structure, F-type ATPases have 2 components, F(1) - the catalytic core - and F(0) - the membrane proton channel. F(1) has five subunits: alpha(3), beta(3), gamma(1), delta(1), epsilon(1). F(0) has three main subunits: a(1), b(2) and c(10-14). The alpha and beta chains form an alternating ring which encloses part of the gamma chain. F(1) is attached to F(0) by a central stalk formed by the gamma and epsilon chains, while a peripheral stalk is formed by the delta and b chains.

Its subcellular location is the cell inner membrane. In terms of biological role, f(1)F(0) ATP synthase produces ATP from ADP in the presence of a proton or sodium gradient. F-type ATPases consist of two structural domains, F(1) containing the extramembraneous catalytic core and F(0) containing the membrane proton channel, linked together by a central stalk and a peripheral stalk. During catalysis, ATP synthesis in the catalytic domain of F(1) is coupled via a rotary mechanism of the central stalk subunits to proton translocation. Functionally, this protein is part of the stalk that links CF(0) to CF(1). It either transmits conformational changes from CF(0) to CF(1) or is implicated in proton conduction. The protein is ATP synthase subunit delta of Syntrophobacter fumaroxidans (strain DSM 10017 / MPOB).